The primary structure comprises 31 residues: Glucagon-5 (31 aa).

This sequence belongs to the glucagon family.

It localises to the secreted. Glucagon plays a key role in glucose metabolism and homeostasis. Regulates blood glucose by increasing gluconeogenesis and decreasing glycolysis. The sequence is that of Glucagon-5 from Huso dauricus (Kaluga sturgeon).